Reading from the N-terminus, the 84-residue chain is UPF0729 protein F18A11.3 (84 aa).

A helical membrane pass occupies residues Met-1 to Met-21.

This sequence belongs to the UPF0729 family.

It localises to the cell membrane. In Caenorhabditis elegans, this protein is UPF0729 protein F18A11.3.